Here is a 90-residue protein sequence, read N- to C-terminus: MILKLMAGILLLTVCLEGCSSQHWSYGLRPGGKRNTEHLVESFQEMGKEVDQMAEPQHFECTVHWPRSPLRDLRGALESLIEEEARQKKM.

The signal sequence occupies residues 1–21 (MILKLMAGILLLTVCLEGCSS). At glutamine 22 the chain carries Pyrrolidone carboxylic acid. Glycine amide is present on glycine 31.

The protein belongs to the GnRH family. In terms of processing, the precursor is cleaved by ACE, which removes the Gly-Lys-Arg peptide at the C-terminus, leading to mature hormone. The mature form of Gonadoliberin-1 is also cleaved and degraded by ACE.

It localises to the secreted. Functionally, stimulates the secretion of gonadotropins; it stimulates the secretion of both luteinizing and follicle-stimulating hormones. The protein is Progonadoliberin-1 (Gnrh1) of Mus musculus (Mouse).